Here is a 380-residue protein sequence, read N- to C-terminus: tRNA pseudouridine synthase B (380 aa).

Residue aspartate 63 is the Nucleophile of the active site. A disordered region spans residues 309–339 (QNVEDDNDDNDDNDDNDDNDDNDDNDDNDDN). Acidic residues predominate over residues 311 to 338 (VEDDNDDNDDNDDNDDNDDNDDNDDNDD).

Belongs to the pseudouridine synthase TruB family. Type 1 subfamily.

It carries out the reaction uridine(55) in tRNA = pseudouridine(55) in tRNA. Responsible for synthesis of pseudouridine from uracil-55 in the psi GC loop of transfer RNAs. This Psychrobacter arcticus (strain DSM 17307 / VKM B-2377 / 273-4) protein is tRNA pseudouridine synthase B.